Reading from the N-terminus, the 853-residue chain is EF-hand domain-containing family member B (853 aa).

Disordered regions lie at residues 1–31 and 244–266; these read MCSF…TRAP and AQQP…PGNI. EF-hand domains lie at 581–616 and 617–652; these read QNFD…ANLH and LDKM…KDRI. Ca(2+) contacts are provided by Asp594, Asp598, Glu605, Asp630, Asp632, Asp634, and Glu641.

As to quaternary structure, microtubule inner protein component of sperm flagellar doublet microtubules. Interacts with STIM1 and ORAI1; the interactions take place upon Ca(2+)-store depletion and dissociate through a Ca(2+)-dependent mechanism. Interaction with STIM1 inhibits STIM1 interaction with SARAF.

Its subcellular location is the cytoplasm. The protein localises to the cytoskeleton. It is found in the cilium axoneme. It localises to the flagellum axoneme. In terms of biological role, microtubule inner protein (MIP) part of the dynein-decorated doublet microtubules (DMTs) in cilia axoneme, which is required for motile cilia beating. Cytosolic sensor for calcium, modulates the interaction of STIM1 and ORAI1 upon store depletion and the activation of store-operated Ca(2+) entry (SOCE) and NFAT translocation from cytosol to nucleus. This is EF-hand domain-containing family member B from Mus musculus (Mouse).